A 395-amino-acid polypeptide reads, in one-letter code: Phosphopentomutase (395 aa).

Positions 14, 286, 291, 327, 328, and 339 each coordinate Mn(2+).

It belongs to the phosphopentomutase family. It depends on Mn(2+) as a cofactor.

Its subcellular location is the cytoplasm. It carries out the reaction 2-deoxy-alpha-D-ribose 1-phosphate = 2-deoxy-D-ribose 5-phosphate. The enzyme catalyses alpha-D-ribose 1-phosphate = D-ribose 5-phosphate. Its pathway is carbohydrate degradation; 2-deoxy-D-ribose 1-phosphate degradation; D-glyceraldehyde 3-phosphate and acetaldehyde from 2-deoxy-alpha-D-ribose 1-phosphate: step 1/2. Isomerase that catalyzes the conversion of deoxy-ribose 1-phosphate (dRib-1-P) and ribose 1-phosphate (Rib-1-P) to deoxy-ribose 5-phosphate (dRib-5-P) and ribose 5-phosphate (Rib-5-P), respectively. This is Phosphopentomutase from Staphylococcus saprophyticus subsp. saprophyticus (strain ATCC 15305 / DSM 20229 / NCIMB 8711 / NCTC 7292 / S-41).